A 417-amino-acid chain; its full sequence is Serine hydroxymethyltransferase (417 aa).

(6S)-5,6,7,8-tetrahydrofolate contacts are provided by residues Leu122 and 126 to 128 (GHL). The residue at position 230 (Lys230) is an N6-(pyridoxal phosphate)lysine. 355–357 (SPF) is a (6S)-5,6,7,8-tetrahydrofolate binding site.

The protein belongs to the SHMT family. As to quaternary structure, homodimer. The cofactor is pyridoxal 5'-phosphate.

The protein localises to the cytoplasm. It carries out the reaction (6R)-5,10-methylene-5,6,7,8-tetrahydrofolate + glycine + H2O = (6S)-5,6,7,8-tetrahydrofolate + L-serine. The protein operates within one-carbon metabolism; tetrahydrofolate interconversion. It participates in amino-acid biosynthesis; glycine biosynthesis; glycine from L-serine: step 1/1. In terms of biological role, catalyzes the reversible interconversion of serine and glycine with tetrahydrofolate (THF) serving as the one-carbon carrier. This reaction serves as the major source of one-carbon groups required for the biosynthesis of purines, thymidylate, methionine, and other important biomolecules. Also exhibits THF-independent aldolase activity toward beta-hydroxyamino acids, producing glycine and aldehydes, via a retro-aldol mechanism. In Francisella tularensis subsp. mediasiatica (strain FSC147), this protein is Serine hydroxymethyltransferase.